A 448-amino-acid chain; its full sequence is Antizyme inhibitor 1 (448 aa).

Belongs to the Orn/Lys/Arg decarboxylase class-II family. ODC antizyme inhibitor subfamily. Monomer. Interacts with OAZ1 and OAZ3; this interaction disrupts the interaction between the antizyme and ODC1. Post-translationally, ubiquitinated, leading to its proteasomal degradation; a process that is reduced in presence of antizyme OAZ1. As to expression, expressed in various tissues including liver, heart and kidney.

The protein resides in the nucleus. In terms of biological role, antizyme inhibitor (AZI) protein that positively regulates ornithine decarboxylase (ODC) activity and polyamine uptake. AZI is an enzymatically inactive ODC homolog that counteracts the negative effect of ODC antizymes (AZs) OAZ1, OAZ2 and OAZ3 on ODC activity by competing with ODC for antizyme-binding. Inhibits antizyme-dependent ODC degradation and releases ODC monomers from their inactive complex with antizymes, leading to formation of the catalytically active ODC homodimer and restoring polyamine production. This Rattus norvegicus (Rat) protein is Antizyme inhibitor 1 (Azin1).